The primary structure comprises 206 residues: MIIAIDGPAASGKGTLGKRIAGHLGLAHLDTGLLYRAVGAACLAAGKLDDEAASVEAARTLDVTTLDPESLRTGAIGEAASVVAARPGVRAALVDLQRRFAARPEGAVLDGRDIGSVICPDATVKLFVTASPEVRAERRFKELAARDPLASYEAVLADIHKRDERDSNRAAAPLVMASDAVLLDTSHLGIEESFAAALAIVERARG.

Position 7–15 (7–15 (GPAASGKGT)) interacts with ATP.

Belongs to the cytidylate kinase family. Type 1 subfamily.

It localises to the cytoplasm. It carries out the reaction CMP + ATP = CDP + ADP. It catalyses the reaction dCMP + ATP = dCDP + ADP. The chain is Cytidylate kinase from Azorhizobium caulinodans (strain ATCC 43989 / DSM 5975 / JCM 20966 / LMG 6465 / NBRC 14845 / NCIMB 13405 / ORS 571).